The chain runs to 626 residues: DNA mismatch repair protein MutL (626 aa).

The interval 377-413 is disordered; that stretch reads EEPQAVKQPTQLWQPSTKPIIEEPIQEEKSWDSNEEG. Residues 383 to 393 show a composition bias toward polar residues; it reads KQPTQLWQPST.

It belongs to the DNA mismatch repair MutL/HexB family.

This protein is involved in the repair of mismatches in DNA. It is required for dam-dependent methyl-directed DNA mismatch repair. May act as a 'molecular matchmaker', a protein that promotes the formation of a stable complex between two or more DNA-binding proteins in an ATP-dependent manner without itself being part of a final effector complex. The chain is DNA mismatch repair protein MutL from Bacillus anthracis (strain A0248).